The primary structure comprises 191 residues: Signal peptidase IB (191 aa).

Residues Met-1 to Glu-7 are Cytoplasmic-facing. The helical transmembrane segment at Trp-8–Thr-28 threads the bilayer. Residues Pro-29–Asn-191 lie on the Extracellular side of the membrane. Residues Ser-36 and Lys-77 contribute to the active site.

The protein belongs to the peptidase S26 family.

It is found in the cell membrane. The enzyme catalyses Cleavage of hydrophobic, N-terminal signal or leader sequences from secreted and periplasmic proteins.. Essential for cell viability. This chain is Signal peptidase IB (spsB), found in Staphylococcus aureus (strain COL).